A 53-amino-acid polypeptide reads, in one-letter code: Temporin-SHd (53 aa).

A signal peptide spans 1-10; it reads FLGTINLSLC. The propeptide occupies 11–34; sequence EQERDADEEKRDEPDESDVEVEKR. F51 is modified (phenylalanine amide).

It localises to the secreted. Its subcellular location is the target cell membrane. In terms of biological role, non-amphipathic mildly cationic alpha-helical antimicrobial peptide with potent activity against Gram-positive (including methicillin-resistant Staphylococcus aureus (MRSA)) and Gram-negative bacteria, and some fungi, as well as against Trypanosoma and Leishmania (both promastigote and amastigote forms). Strongly and selectively perturbs anionic bilayer membranes by interacting with the polar head groups and acyl region of the phospholipids, with formation of regions of two coexisting phases, one phase rich in peptide and the other lipid-rich. Shows low hemolytic activity (LC(50)=44 uM) and a low toxicity for human monocytes THP-1 and THP-1-derived macrophages. Is not toxic to human hepatoma-derived cells. This Pelophylax saharicus (Sahara frog) protein is Temporin-SHd.